Consider the following 349-residue polypeptide: Sexual stage-specific protein G37 (349 aa).

A signal peptide spans 1–18; the sequence is MKLYLVTFLFFVIYKNKT. The Extracellular portion of the chain corresponds to 19 to 91; sequence FVDCVTKKQD…INQVSNNIMR (73 aa). A helical transmembrane segment spans residues 92–112; sequence VYISLLSLFLFPYFSYIGIFG. The Cytoplasmic portion of the chain corresponds to 113–117; that stretch reads HSRNK. A helical transmembrane segment spans residues 118-138; sequence ANLTLSSLLAYFALLVSFFLF. Over 139 to 140 the chain is Extracellular; the sequence is NG. A helical membrane pass occupies residues 141–161; it reads ILNIGFVTSLPLVVAVLIFIL. At 162-176 the chain is on the cytoplasmic side; the sequence is GVSDCEINFLYKYTR. The chain crosses the membrane as a helical span at residues 177-197; that stretch reads YIFCFIISKLIYDVVTYISKD. At 198-218 the chain is on the extracellular side; that stretch reads GANIFDYGFSGHIYMNLLRGK. The helical transmembrane segment at 219 to 239 threads the bilayer; it reads YYIVLKLIHLIILSLISLIII. The Cytoplasmic segment spans residues 240 to 262; it reads KICPKIFSNNHLKSPISITFDKY. Residues 263–283 traverse the membrane as a helical segment; it reads IISFLCSLPIATAISQVFYLL. Over 284-305 the chain is Extracellular; the sequence is SKTINPIDPSIFFMIPSSINFS. The chain crosses the membrane as a helical span at residues 306–326; the sequence is STGTIFSLSIWILMSYLMTFL. The Cytoplasmic portion of the chain corresponds to 327-349; that stretch reads RNKVEADFNNILNKIPNNLPDFI.

The protein localises to the cell membrane. In terms of biological role, involved in the development of male gametocytes. The polypeptide is Sexual stage-specific protein G37 (Plasmodium berghei (strain Anka)).